The primary structure comprises 1230 residues: Serine/threonine-protein kinase PDK1 (1230 aa).

A disordered region spans residues 1 to 277 (MASSHFGPAS…ASSGALKKHS (277 aa)). The segment covering 34–50 (SSSSSSRSTTTCSSTSS) has biased composition (low complexity). Positions 62 to 76 (ETSTAATSRSQLPSN) are enriched in polar residues. Positions 77 to 87 (RHSENEAEHDT) are enriched in basic and acidic residues. Composition is skewed to polar residues over residues 107–117 (PRSNRLGTSPQ) and 140–175 (SKRQ…SSTI). Positions 185-202 (PNDRLSHDRESHSAERPR) are enriched in basic and acidic residues. Polar residues predominate over residues 217-226 (STPSSPTNSY). The segment covering 252-262 (ARDGDDRERRQ) has biased composition (basic and acidic residues). The Protein kinase domain maps to 281–801 (WVLGEELGVG…ITFIKTHPFF (521 aa)). ATP-binding positions include 291 to 293 (SYS) and K319. Disordered regions lie at residues 345–522 (LSDP…RSGA) and 534–597 (TLPP…KMSA). Composition is skewed to polar residues over residues 378–397 (TASI…TVSN) and 408–433 (IVTT…SPTA). Composition is skewed to basic and acidic residues over residues 466 to 494 (GGED…DNMT) and 502 to 521 (VREE…ERSG). Residues 535–544 (LPPPQIPSTP) show a composition bias toward pro residues. Positions 555–569 (DGHRTSRETPRDRPH) are enriched in basic and acidic residues. Residues 621 to 623 (SLA) and E627 contribute to the ATP site. Residue D666 is the Proton acceptor of the active site. E670 and D684 together coordinate ATP. Over residues 850 to 859 (EDEDGFEYDA) the composition is skewed to acidic residues. 4 disordered regions span residues 850–871 (EDED…GGAV), 907–955 (LGED…GGNR), 972–1035 (GGGM…SDEA), and 1116–1152 (EADG…GGGH). Residues 927 to 942 (GKREKEVEKKKGEKAR) show a composition bias toward basic and acidic residues. Composition is skewed to low complexity over residues 977-992 (GSAT…RTPG), 1002-1030 (RPGS…GASM), and 1120-1137 (DPAG…SHVE). The span at 1138–1152 (SGGGGVGGGGRGGGH) shows a compositional bias: gly residues.

This sequence belongs to the protein kinase superfamily. AGC Ser/Thr protein kinase family. PDPK1 subfamily.

It catalyses the reaction L-seryl-[protein] + ATP = O-phospho-L-seryl-[protein] + ADP + H(+). It carries out the reaction L-threonyl-[protein] + ATP = O-phospho-L-threonyl-[protein] + ADP + H(+). In terms of biological role, serine/threonine-protein kinase that functions in the sphingolipid-mediated signaling pathway, regulating organization of the plasma membrane. May phosphorylate PKC1 to activate the cell integrity MAPK cascade during cell wall and membrane stress. May regulate sphingolipid metabolism upstream of YPK1. This chain is Serine/threonine-protein kinase PDK1, found in Cryptococcus neoformans var. grubii serotype A (strain H99 / ATCC 208821 / CBS 10515 / FGSC 9487) (Filobasidiella neoformans var. grubii).